The primary structure comprises 494 residues: Acetylcholine receptor subunit epsilon (494 aa).

Positions 1–20 (MTMALLGTLLLLALFGRSQG) are cleaved as a signal peptide. The Extracellular segment spans residues 21–239 (KNEELSLYHH…VIYTLIIRRK (219 aa)). 2 N-linked (GlcNAc...) asparagine glycosylation sites follow: N86 and N161. A disulfide bridge links C148 with C162. Residues 240-264 (PLFYVINIIVPCVLISGLVLLAYFL) form a helical membrane-spanning segment. Topologically, residues 265-272 (PAQAGGQK) are cytoplasmic. The chain crosses the membrane as a helical span at residues 273–291 (CTVSINVLLAQTVFLFLIA). Topologically, residues 292-306 (QKIPETSLSVPLLGR) are extracellular. The helical transmembrane segment at 307-328 (YLIFVMVVATLIVMNCVIVLNV) threads the bilayer. Residues 329–457 (SLRTPTTHAT…WVRMGKALDN (129 aa)) lie on the Cytoplasmic side of the membrane. The chain crosses the membrane as a helical span at residues 458–481 (VCFWAALVLFSVGSTLIFLGGYFN). Over 482 to 494 (QVPDLPYPPCIQP) the chain is Extracellular.

The protein belongs to the ligand-gated ion channel (TC 1.A.9) family. Acetylcholine receptor (TC 1.A.9.1) subfamily. Epsilon/CHRNE sub-subfamily. As to quaternary structure, pentamer of two alpha chains, and one each of the beta, delta, and gamma (in immature muscle) or epsilon (in mature muscle) chains. The muscle heteropentamer composed of alpha-1, beta-1, delta, epsilon subunits interacts with the alpha-conotoxin ImII.

The protein localises to the postsynaptic cell membrane. It is found in the cell membrane. The enzyme catalyses K(+)(in) = K(+)(out). The catalysed reaction is Na(+)(in) = Na(+)(out). After binding acetylcholine, the AChR responds by an extensive change in conformation that affects all subunits and leads to opening of an ion-conducting channel across the plasma membrane. The protein is Acetylcholine receptor subunit epsilon (Chrne) of Rattus norvegicus (Rat).